Consider the following 689-residue polypeptide: Acetyl-coenzyme A synthetase 2-like, mitochondrial (689 aa).

Residues 1-37 constitute a mitochondrion transit peptide; that stretch reads MAARTLGRGVGRLLGSLRGLSGQPARPPCGVSAPRRA. The tract at residues 17–46 is disordered; the sequence is LRGLSGQPARPPCGVSAPRRAASGPSGSAP. The segment covering 32–46 has biased composition (low complexity); sequence SAPRRAASGPSGSAP. Residues 224–227 and Thr-341 contribute to the CoA site; that span reads RGGR. Residue Lys-396 is modified to N6-acetyllysine. ATP contacts are provided by residues 417 to 419, 441 to 446, Asp-533, and Arg-548; these read GEP and DTWWQT. Residue Ser-556 coordinates CoA. Position 559 (Arg-559) interacts with ATP. Lys-642 bears the N6-acetyllysine mark.

It belongs to the ATP-dependent AMP-binding enzyme family. In terms of assembly, interacts with SIRT3. In terms of processing, reversibly acetylated on Lys-642. The acetyl-CoA synthase activity is inhibited by acetylation and activated by deacetylation mediated by the deacetylase SIRT3.

It is found in the mitochondrion matrix. The catalysed reaction is acetate + ATP + CoA = acetyl-CoA + AMP + diphosphate. It catalyses the reaction propanoate + ATP + CoA = propanoyl-CoA + AMP + diphosphate. Inhibited by acetylation at Lys-642 and activated by deacetylation mediated by the deacetylase SIRT3. In terms of biological role, catalyzes the synthesis of acetyl-CoA from short-chain fatty acids. Acetate is the preferred substrate. Can also utilize propionate with a much lower affinity. Provides acetyl-CoA that is utilized mainly for oxidation under ketogenic conditions. Involved in thermogenesis under ketogenic conditions, using acetate as a vital fuel when carbohydrate availability is insufficient. The protein is Acetyl-coenzyme A synthetase 2-like, mitochondrial (ACSS1) of Homo sapiens (Human).